The sequence spans 308 residues: Regulating synaptic membrane exocytosis protein 3 (308 aa).

Positions Ser-86–Thr-120 are disordered. A compositionally biased stretch (low complexity) spans Asp-109–Thr-120. The region spanning Pro-156–Tyr-274 is the C2 domain. Phosphoserine occurs at positions 295 and 298.

In terms of assembly, binds PPFIA3. Does not bind RAB3.

Its subcellular location is the synapse. Functionally, regulates synaptic membrane exocytosis. This is Regulating synaptic membrane exocytosis protein 3 (RIMS3) from Homo sapiens (Human).